Reading from the N-terminus, the 122-residue chain is Small ribosomal subunit protein uS13 (122 aa).

Residues 95-122 (GLPVRGQRTRTNARTRKGPRKTVAKKKK) are disordered.

The protein belongs to the universal ribosomal protein uS13 family. In terms of assembly, part of the 30S ribosomal subunit. Forms a loose heterodimer with protein S19. Forms two bridges to the 50S subunit in the 70S ribosome.

In terms of biological role, located at the top of the head of the 30S subunit, it contacts several helices of the 16S rRNA. In the 70S ribosome it contacts the 23S rRNA (bridge B1a) and protein L5 of the 50S subunit (bridge B1b), connecting the 2 subunits; these bridges are implicated in subunit movement. Contacts the tRNAs in the A and P-sites. The chain is Small ribosomal subunit protein uS13 from Thermoanaerobacter pseudethanolicus (strain ATCC 33223 / 39E) (Clostridium thermohydrosulfuricum).